The sequence spans 87 residues: MANIKSQQKRNRTNERARLRNKSVKSSLRTAVRSFRDAAHSGDKEKAAELLVSTNRKLDKAASKGVIHKNQAANKKSALARALNKLG.

The interval 1 to 28 is disordered; the sequence is MANIKSQQKRNRTNERARLRNKSVKSSL.

The protein belongs to the bacterial ribosomal protein bS20 family.

Functionally, binds directly to 16S ribosomal RNA. The chain is Small ribosomal subunit protein bS20 from Mycobacterium marinum (strain ATCC BAA-535 / M).